Consider the following 79-residue polypeptide: Defensin-like protein 54 (79 aa).

Positions 1–27 are cleaved as a signal peptide; sequence MGIKKTSATVFLVIILTISFSYYDVEA. 4 disulfides stabilise this stretch: Cys39/Cys76, Cys43/Cys67, Cys52/Cys74, and Cys56/Cys75.

Belongs to the DEFL family.

It localises to the secreted. This chain is Defensin-like protein 54, found in Arabidopsis thaliana (Mouse-ear cress).